Consider the following 351-residue polypeptide: Nuclear inhibitor of protein phosphatase 1 (351 aa).

Residues 1–142 (MAAAVNSGSS…LPSAVKGDEK (142 aa)) are interaction with CDC5L, SF3B1 and MELK. One can recognise an FHA domain in the interval 49–101 (YLFGRNPDLCDFTIDHQSCSRVHAALVYHKHLKRVFLIDLNSTHGTFLGHIRL). Residues 143–224 (MGGEDDELKG…VDPSVGRFRN (82 aa)) are interaction with EED. Threonine 161 is subject to Phosphothreonine. 2 positions are modified to phosphoserine: serine 178 and serine 199. 2 consecutive short sequence motifs (nuclear localization signal) follow at residues 185 to 209 (GNLD…DDEI) and 210 to 240 (INPE…RMEG). Residues 191 to 200 (RPKRKRKNSR) form an involved in PP-1 inhibition region. Residues 200–203 (RVTF) form an involved in PP-1 binding region. Serine 204 bears the Phosphoserine mark. Phosphoserine is present on serine 249. Tyrosine 264 carries the post-translational modification Phosphotyrosine. The interaction with EED stretch occupies residues 310 to 329 (AVAINPTPNPAVYNPEAVNE). A disordered region spans residues 314 to 351 (NPTPNPAVYNPEAVNEPKKKKYAKEAWPGKKPTPSLLI). The tract at residues 330 to 351 (PKKKKYAKEAWPGKKPTPSLLI) is RNA-binding. The tract at residues 331-337 (KKKKYAK) is involved in PP-1 inhibition. Residue tyrosine 335 is modified to Phosphotyrosine.

As to quaternary structure, interacts with phosphorylated CDC5L, SF3B1 and MELK. Part of the spliceosome. Interacts with PPP1CA, PPP1CB and PPP1CC. Interacts with EED. Part of a complex consisting of PPP1R8, EED, HDAC2 and PP-1. In terms of processing, may be inactivated by phosphorylation on Ser-199 or Ser-204.

The protein localises to the nucleus. Its subcellular location is the nucleus speckle. Functionally, inhibitor subunit of the major nuclear protein phosphatase-1 (PP-1). It has RNA-binding activity but does not cleave RNA and may target PP-1 to RNA-associated substrates. May also be involved in pre-mRNA splicing. Binds DNA and might act as a transcriptional repressor. Essential for cell proliferation and early embryonic development. This is Nuclear inhibitor of protein phosphatase 1 (Ppp1r8) from Mus musculus (Mouse).